The chain runs to 115 residues: Macrophage migration inhibitory factor (115 aa).

The Proton acceptor; via imino nitrogen role is filled by Pro-2. Residues Lys-33 and Ile-65 each coordinate substrate. Lys-78 carries the N6-acetyllysine; alternate modification. Lys-78 is modified (N6-succinyllysine; alternate). Asn-98 is a substrate binding site.

It belongs to the MIF family. Homotrimer. Interacts with CXCR2 extracellular domain. Interacts with the CD74 extracellular domain, USO1, COPS5 and BNIPL.

It localises to the secreted. Its subcellular location is the cytoplasm. The catalysed reaction is 3-phenylpyruvate = enol-phenylpyruvate. It catalyses the reaction L-dopachrome = 5,6-dihydroxyindole-2-carboxylate. Functionally, pro-inflammatory cytokine involved in the innate immune response to bacterial pathogens. The expression of MIF at sites of inflammation suggests a role as mediator in regulating the function of macrophages in host defense. Counteracts the anti-inflammatory activity of glucocorticoids. Has phenylpyruvate tautomerase and dopachrome tautomerase activity (in vitro), but the physiological substrate is not known. It is not clear whether the tautomerase activity has any physiological relevance, and whether it is important for cytokine activity. The chain is Macrophage migration inhibitory factor from Homo sapiens (Human).